A 110-amino-acid chain; its full sequence is MASKITIFFVLALVVVCTMMVCIPTATAELVLPCKTTYDCVNLPCLGRPPLCINGQCKCTTTLTHQAKLDNLRTMNDAKTCKYTSDCDPRMRYSCVSGSYICLNGFCTCT.

Positions 1–28 (MASKITIFFVLALVVVCTMMVCIPTATA) are cleaved as a signal peptide. Intrachain disulfides connect Cys34–Cys52, Cys40–Cys57, Cys45–Cys59, Cys81–Cys102, Cys87–Cys107, and Cys95–Cys109.

This sequence belongs to the DEFL family.

It localises to the secreted. In Arabidopsis thaliana (Mouse-ear cress), this protein is Defensin-like protein 296.